A 117-amino-acid polypeptide reads, in one-letter code: MIDKIKSNARDLRRNLTLQERKLWRYLRSRRFSDFKFRRQHPVGSYILDFACCSARVVVELDGGQHDLAVAYDSRRTSWLESQGWTVLRFWNNEIDCNEETVLENILQELNRRSPSP.

It to H.influenzae HI_1162 and to HI_0925.

This is an uncharacterized protein from Escherichia coli (strain K12).